The following is a 205-amino-acid chain: Mitochondrial ATP-independent inner membrane protease subunit 2 (205 aa).

Catalysis depends on residues E59 and R104.

The protein belongs to the peptidase S26 family. IMP1 subfamily. In terms of assembly, heterodimer of 2 subunits, IMP1A/B and IMP12.

Its subcellular location is the mitochondrion inner membrane. In terms of biological role, catalyzes the removal of transit peptides required for the targeting of proteins from the mitochondrial matrix, across the inner membrane, into the inter-membrane space. The chain is Mitochondrial ATP-independent inner membrane protease subunit 2 from Arabidopsis thaliana (Mouse-ear cress).